The chain runs to 478 residues: ATP synthase subunit beta (478 aa).

151-158 (GGAGVGKT) contacts ATP.

The protein belongs to the ATPase alpha/beta chains family. As to quaternary structure, F-type ATPases have 2 components, CF(1) - the catalytic core - and CF(0) - the membrane proton channel. CF(1) has five subunits: alpha(3), beta(3), gamma(1), delta(1), epsilon(1). CF(0) has three main subunits: a(1), b(2) and c(9-12). The alpha and beta chains form an alternating ring which encloses part of the gamma chain. CF(1) is attached to CF(0) by a central stalk formed by the gamma and epsilon chains, while a peripheral stalk is formed by the delta and b chains.

The protein resides in the cell inner membrane. It catalyses the reaction ATP + H2O + 4 H(+)(in) = ADP + phosphate + 5 H(+)(out). Its function is as follows. Produces ATP from ADP in the presence of a proton gradient across the membrane. The catalytic sites are hosted primarily by the beta subunits. The protein is ATP synthase subunit beta of Xanthobacter autotrophicus (strain ATCC BAA-1158 / Py2).